Here is a 120-residue protein sequence, read N- to C-terminus: Large ribosomal subunit protein uL18 (120 aa).

It belongs to the universal ribosomal protein uL18 family. Part of the 50S ribosomal subunit; part of the 5S rRNA/L5/L18/L25 subcomplex. Contacts the 5S and 23S rRNAs.

Its function is as follows. This is one of the proteins that bind and probably mediate the attachment of the 5S RNA into the large ribosomal subunit, where it forms part of the central protuberance. The polypeptide is Large ribosomal subunit protein uL18 (Methylobacterium nodulans (strain LMG 21967 / CNCM I-2342 / ORS 2060)).